A 242-amino-acid chain; its full sequence is Probable septum site-determining protein MinC (242 aa).

Belongs to the MinC family. In terms of assembly, interacts with MinD and FtsZ.

Functionally, cell division inhibitor that blocks the formation of polar Z ring septums. Rapidly oscillates between the poles of the cell to destabilize FtsZ filaments that have formed before they mature into polar Z rings. Prevents FtsZ polymerization. The chain is Probable septum site-determining protein MinC from Buchnera aphidicola subsp. Schizaphis graminum (strain Sg).